Consider the following 244-residue polypeptide: MTNPFDSAGSKAPPKPFTVSEGRREVRSFVLRQGRFTPAQQRAFDERWPRFGLDYTGQPRDLDATFGRPAHKVLEIGFGNGAALRFAAQHDPSRDYIGIEVHAPGVGRLLNALADDNADHVRLYHHDAVEVLQNEIADGALDEVRIYFPDPWHKKRHNKRRLLQPAFAELLVRKLRPGGRLHCATDWEDYAEQMWDVLDATAGLVNRAGPRGSVPRPDWRPQTHFETRGQKLGHGVWDLLYDRT.

Residues 1–20 (MTNPFDSAGSKAPPKPFTVS) are disordered. S-adenosyl-L-methionine-binding residues include glutamate 75, glutamate 100, aspartate 127, and aspartate 150. Aspartate 150 is an active-site residue. Lysine 154 serves as a coordination point for substrate. The interaction with RNA stretch occupies residues 156–161 (RHNKRR). Residues aspartate 186 and 223–226 (THFE) each bind substrate.

It belongs to the class I-like SAM-binding methyltransferase superfamily. TrmB family.

It catalyses the reaction guanosine(46) in tRNA + S-adenosyl-L-methionine = N(7)-methylguanosine(46) in tRNA + S-adenosyl-L-homocysteine. The protein operates within tRNA modification; N(7)-methylguanine-tRNA biosynthesis. In terms of biological role, catalyzes the formation of N(7)-methylguanine at position 46 (m7G46) in tRNA. In Stenotrophomonas maltophilia (strain K279a), this protein is tRNA (guanine-N(7)-)-methyltransferase.